Reading from the N-terminus, the 497-residue chain is Angiopoietin-1 (497 aa).

The N-terminal stretch at 1–15 (MTVFLSFAFLAAILT) is a signal peptide. N-linked (GlcNAc...) asparagine glycans are attached at residues Asn92, Asn122, Asn154, Asn243, and Asn294. The stretch at 153–261 (LNQTSRLEIQ…LELMDTVHNL (109 aa)) forms a coiled coil. In terms of domain architecture, Fibrinogen C-terminal spans 276 to 496 (KEEEKPFRDC…STTMMIRPLD (221 aa)). Intrachain disulfides connect Cys285–Cys314 and Cys438–Cys451.

In terms of assembly, homooligomer. Interacts with TEK/TIE2. Interacts with SVEP1/polydom. Interacts with THBD; this interaction significantly inhibits the generation of activated PC and TAFIa/CPB2 by the thrombin/thrombomodulin complex.

It is found in the secreted. Its function is as follows. Binds and activates TIE2 receptor by inducing its tyrosine phosphorylation. Implicated in endothelial developmental processes later and distinct from that of VEGF. Appears to play a crucial role in mediating reciprocal interactions between the endothelium and surrounding matrix and mesenchyme. Mediates blood vessel maturation/stability. It may play an important role in the heart early development. This is Angiopoietin-1 (ANGPT1) from Bos taurus (Bovine).